A 421-amino-acid chain; its full sequence is 4-hydroxy-3-methylbut-2-en-1-yl diphosphate synthase (flavodoxin) (421 aa).

[4Fe-4S] cluster-binding residues include C298, C301, C344, and E351.

The protein belongs to the IspG family. It depends on [4Fe-4S] cluster as a cofactor.

It catalyses the reaction (2E)-4-hydroxy-3-methylbut-2-enyl diphosphate + oxidized [flavodoxin] + H2O + 2 H(+) = 2-C-methyl-D-erythritol 2,4-cyclic diphosphate + reduced [flavodoxin]. Its pathway is isoprenoid biosynthesis; isopentenyl diphosphate biosynthesis via DXP pathway; isopentenyl diphosphate from 1-deoxy-D-xylulose 5-phosphate: step 5/6. Converts 2C-methyl-D-erythritol 2,4-cyclodiphosphate (ME-2,4cPP) into 1-hydroxy-2-methyl-2-(E)-butenyl 4-diphosphate. In Neisseria meningitidis serogroup B (strain ATCC BAA-335 / MC58), this protein is 4-hydroxy-3-methylbut-2-en-1-yl diphosphate synthase (flavodoxin).